The primary structure comprises 1140 residues: Eukaryotic translation initiation factor 3 subunit A (1140 aa).

The PCI domain occupies 319–502; that stretch reads LQRMAAHVLL…HCIYFGTDLT (184 aa). 6 stretches are compositionally biased toward basic and acidic residues: residues 590–624, 826–903, 925–965, 1000–1019, 1026–1053, and 1061–1087; these read NNAR…EERE, RMAQ…RPEG, DRAD…KDNE, SRDD…DFRN, RGGD…EQQR, and DAPR…RDVR. Disordered regions lie at residues 590-632 and 826-1140; these read NNAR…QNEI and RMAQ…VKRR. Residues 1091 to 1101 are compositionally biased toward gly residues; it reads PKEGGGGGGGN. Residues 1108-1130 are compositionally biased toward basic and acidic residues; it reads PRDEKPTTKQRDQPQDKENKAGD.

This sequence belongs to the eIF-3 subunit A family. Component of the eukaryotic translation initiation factor 3 (eIF-3) complex. The eIF-3 complex interacts with pix.

Its subcellular location is the cytoplasm. Functionally, RNA-binding component of the eukaryotic translation initiation factor 3 (eIF-3) complex, which is involved in protein synthesis of a specialized repertoire of mRNAs and, together with other initiation factors, stimulates binding of mRNA and methionyl-tRNAi to the 40S ribosome. The eIF-3 complex specifically targets and initiates translation of a subset of mRNAs involved in cell proliferation. This chain is Eukaryotic translation initiation factor 3 subunit A, found in Drosophila willistoni (Fruit fly).